The following is a 396-amino-acid chain: Protein NDRG1-A (396 aa).

The segment at 326–396 is disordered; that stretch reads RSRTGSAASS…NSPKSMEVSC (71 aa). Residues 327 to 340 are compositionally biased toward low complexity; the sequence is SRTGSAASSSSQDG. Tandem repeats lie at residues 340-349, 350-359, 360-369, and 370-379. Residues 340–379 form a 4 X 10 AA tandem repeats of G-[NS]-R-S-R-[AS]-H-T-[DGN]-[DET] region; the sequence is GNRSRSHTNEGSRSRSHTGDGNRSRAHTGDGNRSRSHTDT. Residues 346–377 show a composition bias toward basic and acidic residues; sequence HTNEGSRSRSHTGDGNRSRAHTGDGNRSRSHT. A compositionally biased stretch (polar residues) spans 378–390; that stretch reads DTNNINSDQNSPK.

Belongs to the NDRG family.

Its function is as follows. May be involved in pronephros development, after specification of the pronephros. The sequence is that of Protein NDRG1-A (ndrg1-a) from Xenopus laevis (African clawed frog).